Consider the following 210-residue polypeptide: Transcriptional regulator MxiE (210 aa).

The HTH araC/xylS-type domain occupies 99 to 199 (YHLVLYLLRT…GFSARELSNI (101 aa)). 2 DNA-binding regions (H-T-H motif) span residues 118-139 (KSLT…RKAL) and 166-189 (ITSA…KTRL).

Functionally, necessary for the secretion of ipa invasins. Probable transcriptional regulatory protein. This Shigella flexneri protein is Transcriptional regulator MxiE (mxiE).